A 487-amino-acid chain; its full sequence is N-succinylglutamate 5-semialdehyde dehydrogenase (487 aa).

221 to 226 is an NAD(+) binding site; it reads GSSRTG. Residues glutamate 244 and cysteine 278 contribute to the active site.

It belongs to the aldehyde dehydrogenase family. AstD subfamily.

It carries out the reaction N-succinyl-L-glutamate 5-semialdehyde + NAD(+) + H2O = N-succinyl-L-glutamate + NADH + 2 H(+). The protein operates within amino-acid degradation; L-arginine degradation via AST pathway; L-glutamate and succinate from L-arginine: step 4/5. Catalyzes the NAD-dependent reduction of succinylglutamate semialdehyde into succinylglutamate. This chain is N-succinylglutamate 5-semialdehyde dehydrogenase, found in Ectopseudomonas mendocina (strain ymp) (Pseudomonas mendocina).